A 353-amino-acid chain; its full sequence is Trans-enoyl reductase fsa3 (353 aa).

An NADP(+)-binding site is contributed by 45 to 48 (VDTK). 131-138 (ISFMTTGL) serves as a coordination point for substrate. Residues 166 to 169 (SSAT), 189 to 192 (SPRN), Tyr-207, and 254 to 255 (LE) contribute to the NADP(+) site. 275–279 (GPQML) contacts substrate. 344–345 (IS) lines the NADP(+) pocket.

This sequence belongs to the zinc-containing alcohol dehydrogenase family. As to quaternary structure, monomer.

It catalyses the reaction L-serine + 7 malonyl-CoA + acetyl-CoA + 2 S-adenosyl-L-methionine + ATP + 8 NADPH + 11 H(+) = (5S)-3-[(2E,6R,8E,10E,12E)-2,6-dimethyltetradeca-2,8,10,12-tetraenoyl]-5-(hydroxymethyl)pyrrolidine-2,4-dione + AMP + 2 S-adenosyl-L-homocysteine + 7 CO2 + diphosphate + 8 NADP(+) + 8 CoA + 6 H2O. It functions in the pathway mycotoxin biosynthesis. Functionally, trans-enoyl reductase; part of the gene cluster that mediates the biosynthesis of HIV-1 integrase inhibitor equisetin and of fusarisetin A, both trans-fused decalin-containing tetramic acids showing also antimicrobial activity. The PKS module of fsa1 together with the enoylreductase fsa3 catalyze the formation of the polyketide unit which is then conjugated to L-serine by the condensation domain of the fsa1 NRPS module. Activity of the Dieckmann cyclase domain (RED) results in release of the Dieckmann product intermediate. Diels-Alderase fsa2 is involved in endo-selective Diels-Alder cycloaddition to form the decalin ring, leading to the production of N-desmethylequisetin also called trichosetin. Subsequent N-methylation is carried out by fsa4 to give equisetin. The enzymatic gene responsible for the conversion of equisetin to fusarisetin A has not been identified yet and is probably located outside of the fsa cluster. This is Trans-enoyl reductase fsa3 from Fusarium sp. (strain FN080326).